Here is a 363-residue protein sequence, read N- to C-terminus: Small ribosomal subunit biogenesis GTPase RsgA (363 aa).

One can recognise a CP-type G domain in the interval 112 to 268 (HQQVIAANID…LIDTPGMREL (157 aa)). GTP contacts are provided by residues 157 to 160 (TKAD) and 210 to 218 (GSSGAGKST). Residues cysteine 291, cysteine 296, histidine 298, and cysteine 304 each coordinate Zn(2+). Residues 340 to 363 (RVAQNNRGKGSGKRPASVDRPGRH) form a disordered region.

It belongs to the TRAFAC class YlqF/YawG GTPase family. RsgA subfamily. As to quaternary structure, monomer. Associates with 30S ribosomal subunit, binds 16S rRNA. The cofactor is Zn(2+).

The protein localises to the cytoplasm. Functionally, one of several proteins that assist in the late maturation steps of the functional core of the 30S ribosomal subunit. Helps release RbfA from mature subunits. May play a role in the assembly of ribosomal proteins into the subunit. Circularly permuted GTPase that catalyzes slow GTP hydrolysis, GTPase activity is stimulated by the 30S ribosomal subunit. The polypeptide is Small ribosomal subunit biogenesis GTPase RsgA (Xanthomonas axonopodis pv. citri (strain 306)).